Here is a 243-residue protein sequence, read N- to C-terminus: MGRKVHPIGFRLGYIKDWQSKWFAEGEEYTRQLHEDIELRKLISKELQSAGVSRIEIERSANKIEISVYTAKPGIVIGKRGTNVDTLKSALERKTGKKIKLNIKEIHQPELDAQLVAESIGEQITRRVSYKRAMKQAVQRAMRLGAQGVKVRCSGRLGGAEMSRVHEEAEGRVPRHTLRADIDYAQVHAHTTYGRIGVKVWIYKGEVFPNQVAKSPAEPATTAPTPAPERRERQPRRNSNASA.

The KH type-2 domain occupies 39–107; it reads LRKLISKELQ…KIKLNIKEIH (69 aa). A disordered region spans residues 212–243; sequence VAKSPAEPATTAPTPAPERRERQPRRNSNASA.

This sequence belongs to the universal ribosomal protein uS3 family. In terms of assembly, part of the 30S ribosomal subunit. Forms a tight complex with proteins S10 and S14.

Binds the lower part of the 30S subunit head. Binds mRNA in the 70S ribosome, positioning it for translation. This chain is Small ribosomal subunit protein uS3, found in Chloroflexus aurantiacus (strain ATCC 29364 / DSM 637 / Y-400-fl).